The sequence spans 201 residues: 3-isopropylmalate dehydratase small subunit (201 aa).

It belongs to the LeuD family. LeuD type 1 subfamily. In terms of assembly, heterodimer of LeuC and LeuD.

The catalysed reaction is (2R,3S)-3-isopropylmalate = (2S)-2-isopropylmalate. Its pathway is amino-acid biosynthesis; L-leucine biosynthesis; L-leucine from 3-methyl-2-oxobutanoate: step 2/4. In terms of biological role, catalyzes the isomerization between 2-isopropylmalate and 3-isopropylmalate, via the formation of 2-isopropylmaleate. The protein is 3-isopropylmalate dehydratase small subunit of Shigella flexneri serotype 5b (strain 8401).